A 365-amino-acid chain; its full sequence is Class I histocompatibility antigen, Gogo-A*0501 alpha chain (365 aa).

The signal sequence occupies residues 1 to 24 (MAVVAPRTLLLLLSGALALTQTWA). Residues 25–114 (GSHSMRYFST…ALRYYNQSED (90 aa)) are alpha-1. At 25–308 (GSHSMRYFST…EPSSQPTIPI (284 aa)) the chain is on the extracellular side. Residue Asn-110 is glycosylated (N-linked (GlcNAc...) asparagine). The alpha-2 stretch occupies residues 115-206 (GSHTIQRMYG…ENGKETLQRT (92 aa)). Intrachain disulfides connect Cys-125-Cys-188 and Cys-227-Cys-283. The alpha-3 stretch occupies residues 207 to 298 (DAPKTHTTHQ…GLPKPLTLRW (92 aa)). The region spanning 209–295 (PKTHTTHQAV…QHEGLPKPLT (87 aa)) is the Ig-like C1-type domain. The interval 299–308 (EPSSQPTIPI) is connecting peptide. Residues 309 to 332 (VGIIAGLVLFGAVIAGAVVAAVRW) form a helical membrane-spanning segment. The Cytoplasmic portion of the chain corresponds to 333-365 (RRKSSDRKGGSYSQAASSDSAQGSDVSLTACKV). The tract at residues 338 to 365 (DRKGGSYSQAASSDSAQGSDVSLTACKV) is disordered. A compositionally biased stretch (low complexity) spans 342–359 (GSYSQAASSDSAQGSDVS). Position 343 is a phosphoserine (Ser-343). Tyr-344 is modified (phosphotyrosine). 5 positions are modified to phosphoserine: Ser-345, Ser-349, Ser-352, Ser-356, and Ser-359.

The protein belongs to the MHC class I family. In terms of assembly, heterodimer of an alpha chain and a beta chain (beta-2-microglobulin).

It localises to the membrane. In terms of biological role, involved in the presentation of foreign antigens to the immune system. This Gorilla gorilla gorilla (Western lowland gorilla) protein is Class I histocompatibility antigen, Gogo-A*0501 alpha chain.